A 663-amino-acid chain; its full sequence is CXXC-type zinc finger protein 1 (663 aa).

A PHD-type zinc finger spans residues 60–110 (QAYCICRSSDCSRFMIGCDGCEEWYHGDCIGITEKEAKHIKQYYCRRCKKE). A compositionally biased stretch (low complexity) spans 134 to 161 (TSLNAPGVGPSGAAPAAAPVASATTSQQ). A disordered region spans residues 134 to 183 (TSLNAPGVGPSGAAPAAAPVASATTSQQAPPPTTAAAKRKNSSAREPKMG). The CXXC-type zinc finger occupies 175–219 (SSAREPKMGKRCGTCEGCRRPNCNQCDACRVRVGHKPRCIFRTCV). Zn(2+) contacts are provided by Cys186, Cys189, Cys192, Cys197, Cys200, Cys203, Cys213, and Cys218. Residues 230 to 254 (QATQAGPSRKREKAAPKSRNVQVGP) form a disordered region. Ser258 carries the phosphoserine modification.

Component of the SET1 complex, composed at least of the catalytic subunit Set1, wds/WDR5, Wdr82, Rbbp5, ash2, Cfp1/CXXC1, hcf and Dpy-30L1.

The protein localises to the nucleus. In terms of biological role, component of the SET1 complex that specifically di- and trimethylates 'Lys-4' of histone H3. Essential for Set1 association with chromatin and trimethylation of histone H3 at 'Lys-4' at transcription puffs. Additionally, is critical for general chromosomal association of Set1. This is CXXC-type zinc finger protein 1 (Cfp1) from Drosophila melanogaster (Fruit fly).